Reading from the N-terminus, the 108-residue chain is UPF0102 protein Sden_0272 (108 aa).

Belongs to the UPF0102 family.

This is UPF0102 protein Sden_0272 from Shewanella denitrificans (strain OS217 / ATCC BAA-1090 / DSM 15013).